Reading from the N-terminus, the 408-residue chain is FAD-dependent monooxygenase nscC (408 aa).

Positions 1–20 (MAPPLPILIIGAGISGLTTA) are cleaved as a signal peptide. FAD is bound by residues Glu34 and Ala45. Residues Asn91 and Asn103 are each glycosylated (N-linked (GlcNAc...) asparagine). Arg119 provides a ligand contact to FAD. 2 N-linked (GlcNAc...) asparagine glycosylation sites follow: Asn170 and Asn231. Residues Asp328 and Gly341 each coordinate FAD.

This sequence belongs to the paxM FAD-dependent monooxygenase family. The cofactor is FAD.

It participates in secondary metabolite biosynthesis. In terms of biological role, FAD-dependent monooxygenase; part of the gene cluster that mediates the biosynthesis of neosartoricin, a prenylated anthracenone that exhibits T-cell antiproliferative activity, suggestive of a physiological role as an immunosuppressive agent. The non-reducing polyketide synthase nscA probably synthesizes and cyclizes the decaketide backbone. The hydrolase nscB then mediates the product release through hydrolysis followed by spontaneous decarboxylation. The prenyltransferase nscD catalyzes the addition of the dimethylallyl group to the aromatic C5. The FAD-dependent monooxygenase nscC is then responsible for the stereospecific hydroxylation at C2. There is no gene encoding O-acetyltransferase in the nsc gene cluster; thus, the last step of 2-O-acetylation leading to neosartoricin may be catalyzed by an unidentified O-acetyltransferase. The protein is FAD-dependent monooxygenase nscC of Neosartorya fischeri (strain ATCC 1020 / DSM 3700 / CBS 544.65 / FGSC A1164 / JCM 1740 / NRRL 181 / WB 181) (Aspergillus fischerianus).